A 251-amino-acid polypeptide reads, in one-letter code: Ubiquinone/menaquinone biosynthesis C-methyltransferase UbiE (251 aa).

S-adenosyl-L-methionine contacts are provided by residues threonine 74, aspartate 95, 123–124 (NA), and serine 140.

It belongs to the class I-like SAM-binding methyltransferase superfamily. MenG/UbiE family.

It carries out the reaction a 2-demethylmenaquinol + S-adenosyl-L-methionine = a menaquinol + S-adenosyl-L-homocysteine + H(+). It catalyses the reaction a 2-methoxy-6-(all-trans-polyprenyl)benzene-1,4-diol + S-adenosyl-L-methionine = a 5-methoxy-2-methyl-3-(all-trans-polyprenyl)benzene-1,4-diol + S-adenosyl-L-homocysteine + H(+). The protein operates within quinol/quinone metabolism; menaquinone biosynthesis; menaquinol from 1,4-dihydroxy-2-naphthoate: step 2/2. Its pathway is cofactor biosynthesis; ubiquinone biosynthesis. Its function is as follows. Methyltransferase required for the conversion of demethylmenaquinol (DMKH2) to menaquinol (MKH2) and the conversion of 2-polyprenyl-6-methoxy-1,4-benzoquinol (DDMQH2) to 2-polyprenyl-3-methyl-6-methoxy-1,4-benzoquinol (DMQH2). The chain is Ubiquinone/menaquinone biosynthesis C-methyltransferase UbiE from Pectobacterium atrosepticum (strain SCRI 1043 / ATCC BAA-672) (Erwinia carotovora subsp. atroseptica).